The primary structure comprises 310 residues: Lipoyl synthase (310 aa).

[4Fe-4S] cluster is bound by residues cysteine 41, cysteine 46, cysteine 52, cysteine 68, cysteine 72, cysteine 75, and serine 281. One can recognise a Radical SAM core domain in the interval 54-270; sequence GERRTATFMI…RKVAMEKGFK (217 aa). A disordered region spans residues 285 to 310; it reads DEQVNEAAKERQRIGDEKLEAAKNEA.

This sequence belongs to the radical SAM superfamily. Lipoyl synthase family. [4Fe-4S] cluster serves as cofactor.

It localises to the cytoplasm. It carries out the reaction [[Fe-S] cluster scaffold protein carrying a second [4Fe-4S](2+) cluster] + N(6)-octanoyl-L-lysyl-[protein] + 2 oxidized [2Fe-2S]-[ferredoxin] + 2 S-adenosyl-L-methionine + 4 H(+) = [[Fe-S] cluster scaffold protein] + N(6)-[(R)-dihydrolipoyl]-L-lysyl-[protein] + 4 Fe(3+) + 2 hydrogen sulfide + 2 5'-deoxyadenosine + 2 L-methionine + 2 reduced [2Fe-2S]-[ferredoxin]. The protein operates within protein modification; protein lipoylation via endogenous pathway; protein N(6)-(lipoyl)lysine from octanoyl-[acyl-carrier-protein]. Functionally, catalyzes the radical-mediated insertion of two sulfur atoms into the C-6 and C-8 positions of the octanoyl moiety bound to the lipoyl domains of lipoate-dependent enzymes, thereby converting the octanoylated domains into lipoylated derivatives. The chain is Lipoyl synthase from Staphylococcus carnosus (strain TM300).